Reading from the N-terminus, the 369-residue chain is Transposase for insertion sequence element IS1201 (369 aa).

The protein belongs to the transposase mutator family.

In terms of biological role, required for the transposition of the insertion element. The polypeptide is Transposase for insertion sequence element IS1201 (Lactobacillus helveticus (Lactobacillus suntoryeus)).